Reading from the N-terminus, the 530-residue chain is Apolipoprotein N-acyltransferase (530 aa).

6 helical membrane-spanning segments follow: residues 19 to 39 (LIAG…PGLL), 65 to 85 (WLAG…AFLV), 96 to 116 (FAVT…ALLY), 128 to 148 (LTFA…LTGF), 169 to 189 (LVGA…PAVW), and 197 to 217 (AATG…AIAL). In terms of domain architecture, CN hydrolase spans 232–485 (VQADIKQDLK…SGVIDAQIPG (254 aa)). Glu-274 serves as the catalytic Proton acceptor. Residue Lys-343 is part of the active site. The active-site Nucleophile is the Cys-396.

Belongs to the CN hydrolase family. Apolipoprotein N-acyltransferase subfamily.

It localises to the cell inner membrane. It carries out the reaction N-terminal S-1,2-diacyl-sn-glyceryl-L-cysteinyl-[lipoprotein] + a glycerophospholipid = N-acyl-S-1,2-diacyl-sn-glyceryl-L-cysteinyl-[lipoprotein] + a 2-acyl-sn-glycero-3-phospholipid + H(+). The protein operates within protein modification; lipoprotein biosynthesis (N-acyl transfer). In terms of biological role, catalyzes the phospholipid dependent N-acylation of the N-terminal cysteine of apolipoprotein, the last step in lipoprotein maturation. The sequence is that of Apolipoprotein N-acyltransferase from Caulobacter vibrioides (strain ATCC 19089 / CIP 103742 / CB 15) (Caulobacter crescentus).